Here is a 261-residue protein sequence, read N- to C-terminus: Complex I assembly factor TIMMDC1, mitochondrial (261 aa).

The next 3 helical transmembrane spans lie at Leu67–Val87, Trp131–Val151, and Ala183–Met203.

The protein belongs to the Tim17/Tim22/Tim23 family. In terms of assembly, associates with complex I assembly intermediates during its biogenesis in a NdufAF3 and NdufAF4 dependent manner.

It localises to the membrane. Chaperone protein involved in the assembly of the mitochondrial NADH:ubiquinone oxidoreductase complex (complex I). Essential for viability. This chain is Complex I assembly factor TIMMDC1, mitochondrial, found in Drosophila melanogaster (Fruit fly).